Reading from the N-terminus, the 118-residue chain is Large ribosomal subunit protein uL18 (118 aa).

Belongs to the universal ribosomal protein uL18 family. In terms of assembly, part of the 50S ribosomal subunit; part of the 5S rRNA/L5/L18/L25 subcomplex. Contacts the 5S and 23S rRNAs.

Functionally, this is one of the proteins that bind and probably mediate the attachment of the 5S RNA into the large ribosomal subunit, where it forms part of the central protuberance. The sequence is that of Large ribosomal subunit protein uL18 from Levilactobacillus brevis (strain ATCC 367 / BCRC 12310 / CIP 105137 / JCM 1170 / LMG 11437 / NCIMB 947 / NCTC 947) (Lactobacillus brevis).